A 111-amino-acid polypeptide reads, in one-letter code: Iron-sulfur cluster assembly protein CyaY (111 aa).

This sequence belongs to the frataxin family.

Its function is as follows. Involved in iron-sulfur (Fe-S) cluster assembly. May act as a regulator of Fe-S biogenesis. This Cupriavidus pinatubonensis (strain JMP 134 / LMG 1197) (Cupriavidus necator (strain JMP 134)) protein is Iron-sulfur cluster assembly protein CyaY.